The chain runs to 559 residues: Glucose-6-phosphate isomerase (559 aa).

The Proton donor role is filled by Glu-363. Residues His-394 and Lys-523 contribute to the active site.

This sequence belongs to the GPI family.

It is found in the cytoplasm. It carries out the reaction alpha-D-glucose 6-phosphate = beta-D-fructose 6-phosphate. Its pathway is carbohydrate biosynthesis; gluconeogenesis. It participates in carbohydrate degradation; glycolysis; D-glyceraldehyde 3-phosphate and glycerone phosphate from D-glucose: step 2/4. In terms of biological role, catalyzes the reversible isomerization of glucose-6-phosphate to fructose-6-phosphate. The protein is Glucose-6-phosphate isomerase of Bartonella quintana (strain Toulouse) (Rochalimaea quintana).